We begin with the raw amino-acid sequence, 292 residues long: Undecaprenyl-diphosphatase (292 aa).

5 helical membrane-spanning segments follow: residues M87–E107, F113–V133, A190–G210, A219–M239, and F250–L270.

The protein belongs to the UppP family.

It localises to the cell membrane. The enzyme catalyses di-trans,octa-cis-undecaprenyl diphosphate + H2O = di-trans,octa-cis-undecaprenyl phosphate + phosphate + H(+). Catalyzes the dephosphorylation of undecaprenyl diphosphate (UPP). Confers resistance to bacitracin. The protein is Undecaprenyl-diphosphatase of Thermobifida fusca (strain YX).